The following is a 406-amino-acid chain: Proteasome-activating nucleotidase 1 (406 aa).

The segment covering 1-12 has biased composition (acidic residues); it reads MTDTVEDVELPY. Positions 1–20 are disordered; the sequence is MTDTVEDVELPYDDSASQQD. A coiled-coil region spans residues 12–70; the sequence is YDDSASQQDKLEALEEQLSTLEEENEEMRDRLLDANAENNKYQQKLERLSHENKKLKQS. Residues 192–197 and H331 contribute to the ATP site; that span reads GTGKTL. The tract at residues 385-406 is disordered; that stretch reads AREKLDQDSEPAAATDVSRTFA. Positions 404-406 are docks into pockets in the proteasome alpha-ring to cause gate opening; sequence TFA.

Belongs to the AAA ATPase family. As to quaternary structure, homohexamer. The hexameric complex has a two-ring architecture resembling a top hat that caps the 20S proteasome core at one or both ends. Upon ATP-binding, the C-terminus of PAN interacts with the alpha-rings of the proteasome core by binding to the intersubunit pockets.

The protein resides in the cytoplasm. Its function is as follows. ATPase which is responsible for recognizing, binding, unfolding and translocation of substrate proteins into the archaeal 20S proteasome core particle. Is essential for opening the gate of the 20S proteasome via an interaction with its C-terminus, thereby allowing substrate entry and access to the site of proteolysis. Thus, the C-termini of the proteasomal ATPase function like a 'key in a lock' to induce gate opening and therefore regulate proteolysis. Unfolding activity requires energy from ATP hydrolysis, whereas ATP binding alone promotes ATPase-20S proteasome association which triggers gate opening, and supports translocation of unfolded substrates. This Halobacterium salinarum (strain ATCC 700922 / JCM 11081 / NRC-1) (Halobacterium halobium) protein is Proteasome-activating nucleotidase 1.